Consider the following 210-residue polypeptide: Large ribosomal subunit protein uL4 (210 aa).

It belongs to the universal ribosomal protein uL4 family. Part of the 50S ribosomal subunit.

One of the primary rRNA binding proteins, this protein initially binds near the 5'-end of the 23S rRNA. It is important during the early stages of 50S assembly. It makes multiple contacts with different domains of the 23S rRNA in the assembled 50S subunit and ribosome. Functionally, forms part of the polypeptide exit tunnel. This is Large ribosomal subunit protein uL4 (rplD) from Thermus thermophilus.